Reading from the N-terminus, the 871-residue chain is Protein translocase subunit SecA (871 aa).

ATP-binding positions include Q80, 98–102, and D537; that span reads GEGKT.

Belongs to the SecA family. In terms of assembly, monomer and homodimer. Part of the essential Sec protein translocation apparatus which comprises SecA, SecYEG and auxiliary proteins SecDF. Other proteins may also be involved.

It is found in the cell inner membrane. It localises to the cytoplasm. The enzyme catalyses ATP + H2O + cellular proteinSide 1 = ADP + phosphate + cellular proteinSide 2.. In terms of biological role, part of the Sec protein translocase complex. Interacts with the SecYEG preprotein conducting channel. Has a central role in coupling the hydrolysis of ATP to the transfer of proteins into and across the cell membrane, serving as an ATP-driven molecular motor driving the stepwise translocation of polypeptide chains across the membrane. The polypeptide is Protein translocase subunit SecA (Thermotoga sp. (strain RQ2)).